Reading from the N-terminus, the 809-residue chain is Leucine--tRNA ligase (809 aa).

The short motif at 40–50 is the 'HIGH' region element; sequence PYPSGRIHMGH. The 'KMSKS' region signature appears at 579 to 583; the sequence is KMSKS. Position 582 (Lys-582) interacts with ATP.

This sequence belongs to the class-I aminoacyl-tRNA synthetase family.

Its subcellular location is the cytoplasm. The catalysed reaction is tRNA(Leu) + L-leucine + ATP = L-leucyl-tRNA(Leu) + AMP + diphosphate. The polypeptide is Leucine--tRNA ligase (Campylobacter jejuni subsp. jejuni serotype O:23/36 (strain 81-176)).